A 115-amino-acid polypeptide reads, in one-letter code: uncharacterized protein (115 aa).

The next 2 helical transmembrane spans lie at 15 to 35 (FSTQ…EVLF) and 52 to 72 (FDGV…YYSI).

The protein resides in the membrane. This is an uncharacterized protein from Saccharomyces cerevisiae (strain ATCC 204508 / S288c) (Baker's yeast).